The chain runs to 756 residues: ATP-dependent 6-phosphofructokinase 2 (756 aa).

The tract at residues 1–393 (MEQKFKKGKD…KQTYLNFVSI (393 aa)) is N-terminal catalytic PFK domain 1. ATP-binding positions include Gly20, 81-82 (RC), and 111-114 (GDGS). Asp112 is a Mg(2+) binding site. Substrate is bound by residues 157–159 (SID), Arg194, 201–203 (MGR), Glu257, Arg285, and 291–294 (HLQR). Asp159 functions as the Proton acceptor in the catalytic mechanism. An interdomain linker region spans residues 394 to 404 (PLSTTMPSRTK). Positions 405–756 (TFAVVHIGSP…KKPQEAVLSS (352 aa)) are C-terminal regulatory PFK domain 2. Beta-D-fructose 2,6-bisphosphate is bound by residues Arg474, 530–534 (TISNN), 575–577 (MGS), Glu632, Arg658, and 664–667 (YSQL).

It belongs to the phosphofructokinase type A (PFKA) family. ATP-dependent PFK group I subfamily. Eukaryotic two domain clade 'E' sub-subfamily. Homotetramer. Mg(2+) is required as a cofactor.

It is found in the cytoplasm. The catalysed reaction is beta-D-fructose 6-phosphate + ATP = beta-D-fructose 1,6-bisphosphate + ADP + H(+). It functions in the pathway carbohydrate degradation; glycolysis; D-glyceraldehyde 3-phosphate and glycerone phosphate from D-glucose: step 3/4. With respect to regulation, allosterically activated by ADP, AMP, or fructose 2,6-bisphosphate, and allosterically inhibited by ATP or citrate. Its function is as follows. Catalyzes the phosphorylation of D-fructose 6-phosphate to fructose 1,6-bisphosphate by ATP, the first committing step of glycolysis. This chain is ATP-dependent 6-phosphofructokinase 2, found in Caenorhabditis elegans.